Consider the following 494-residue polypeptide: Cysteine--tRNA ligase (494 aa).

Cysteine 29 provides a ligand contact to Zn(2+). Positions 31-41 (VTVYDYCHLGH) match the 'HIGH' region motif. Zn(2+) contacts are provided by cysteine 216, histidine 241, and glutamate 245. The 'KMSKS' region signature appears at 273-277 (KMSKS). An ATP-binding site is contributed by lysine 276.

The protein belongs to the class-I aminoacyl-tRNA synthetase family. Monomer. The cofactor is Zn(2+).

The protein resides in the cytoplasm. The enzyme catalyses tRNA(Cys) + L-cysteine + ATP = L-cysteinyl-tRNA(Cys) + AMP + diphosphate. This chain is Cysteine--tRNA ligase, found in Cyanothece sp. (strain PCC 7425 / ATCC 29141).